The sequence spans 1421 residues: MEGSYWWLSLLALLAWGANGESTSPAETSPAPTTPNPPVVNPSLRRKIVNQRILSAMGMDSDPSNEALNGVCQSIHSNGCNANELKLRLADFFIDTNSSQCYDEILVKKPCSSLTPAHNSHWVPRGLDKSEVDKIFDTKLKLFFSQSRKVTCLSASALNPSQFVKHFQVKIQETSGPAKQSLRSLHCVNLVWSHSHKGEKEVVHVLQSAVPVKLKNCLAMLNFRQCYYNQQSEGPVVVPSYQHNGEKWVTGAYTMTVEVDKHADGPCEISTTCITEGSEIKPGVHSLRGFKTTLVIHGKRNTGRRLLSSSNARQECSSGTFLGEGGSAQVVGPKNDGPGDHITFCNGSVVTKIRLGQEHGCYTVRRIKTYRNCRPEEGSSACEVDDELKPCGAQKCMNVHLSVKGLVKTSRGSNVQVHSCDKDCLIQIPEGFGDIQIDCPGGTQHYLESNVLDVDCPMYNRLGGLMLYFCRMSHRPRTCLALFIWLGAGYGITCIAGYMVYYAILALSMLTRCLKRKYMVKGDFCLKCEQKCVTSLDQTLHDESCSYNICPYCGNRLPEEGLRRHVPSCPKRKQRLEEIDLYLDYLLVPCPLHFALSTAVKLGTLLKRLSWVTVFLCLFLTAIAPVQGQVTTSPVLPSNQSTECTLLPPPVFLIFSAVLMSKTLKRMGPVNKVGAAGHSARRTNSPKNLYKSKQIANTKSGPREPRRRVVVKALLILTASSALQSIHLAQAFDSGSLPEGAWEEEMQLVQGCNQECSLEEDECSCPDGQSMTRKLLFFKGLNSAASKMASSHRLLTSVSIDTPWGAIKVESTYKPRLASSNIQLAWNSIEEQGDKVILSGKSTSIIKLEEKTGMQWSLGSESAAEEKRLLVSILDYTQVYSSTFQYITGDRTVSEWPKATCTGDCPDRCGCSTSSCLYKSWPHSRNWRCNPTWCWGVGTGCTCCGVDILRPFNKYFVTKWTTEYVRTDVLVCVELTDQERHCDVVEAGSQFVIGPVRVVVSDPQNVQTKLPSEILTIQKLEGNQVVDIMHATSIVSAKNACKLQSCTHGSPGDMQILHTDNLIQHSHDGGLNLADLNPLVNSTWMSWEGCDLDYYCTTGSWPSCTYTGINSENTESFDNLLNTESNLCERFHFHSKRISASGSTLQMDLKGRPNSGGGELSVLVDVKGLELHSKKISLKGLSFKTLSCSGCYACSSGLSCTVEVRIERPDEFTVHLRSVSPDIAVAEGSIIARRMTGGPLSRLRAFAVRKVKKICFEIVEKSYCKDCKNEDTTKCIEVELQPPKDILLEHKGTIIKRQNETCVSGLQCWTESASSFVSGVGSFFRNYLGSITLGIVLTLLPVAVVLLFFCYGDKLFKLCSCFRCCRGLSRGKVRKELDEDELRNKLKKFSKEGELFGKEKKDARTIALLLSGKGKNYKELV.

Residues 1–20 form the signal peptide; that stretch reads MEGSYWWLSLLALLAWGANG. Over 21-479 the chain is Lumenal; sequence ESTSPAETSP…CRMSHRPRTC (459 aa). Positions 22–31 are enriched in low complexity; that stretch reads STSPAETSPA. The segment at 22–42 is disordered; that stretch reads STSPAETSPAPTTPNPPVVNP. N97 and N346 each carry an N-linked (GlcNAc...) asparagine; by host glycan. Residues 480-500 traverse the membrane as a helical segment; the sequence is LALFIWLGAGYGITCIAGYMV. Residues 501-610 lie on the Cytoplasmic side of the membrane; it reads YYAILALSML…KLGTLLKRLS (110 aa). The helical transmembrane segment at 611-631 threads the bilayer; it reads WVTVFLCLFLTAIAPVQGQVT. Over 632–643 the chain is Lumenal; it reads TSPVLPSNQSTE. N-linked (GlcNAc...) asparagine; by host glycosylation occurs at N639. Residues 644-664 traverse the membrane as a helical segment; sequence CTLLPPPVFLIFSAVLMSKTL. Residues 665–708 are Cytoplasmic-facing; the sequence is KRMGPVNKVGAAGHSARRTNSPKNLYKSKQIANTKSGPREPRRR. Residues 709–729 traverse the membrane as a helical segment; sequence VVVKALLILTASSALQSIHLA. Residues 722–776 constitute a propeptide that is removed on maturation; sequence ALQSIHLAQAFDSGSLPEGAWEEEMQLVQGCNQECSLEEDECSCPDGQSMTRKLL. The Lumenal segment spans residues 730-1330; the sequence is QAFDSGSLPE…GSFFRNYLGS (601 aa). 2 cysteine pairs are disulfide-bonded: C901–C1096 and C929–C934. 2 N-linked (GlcNAc...) asparagine; by host glycosylation sites follow: N1081 and N1299. A helical transmembrane segment spans residues 1331-1351; sequence ITLGIVLTLLPVAVVLLFFCY. At 1352–1421 the chain is on the cytoplasmic side; the sequence is GDKLFKLCSC…GKGKNYKELV (70 aa).

The protein belongs to the nairovirus envelope glycoprotein family. Heterodimer with glycoprotein C; in prefusion state. In terms of assembly, heterodimer with glycoprotein N; in prefusion state. Homotrimeric; in postfusion state. Specific enzymatic cleavage by host MBTPS1/S1P/SKI-1 endopeptidase yield glycoprotein N. Specific enzymatic cleavages by host furin-like protease and MBTPS1/S1P endopeptidase yield GP38. Post-translationally, glycosylated.

The protein localises to the host endoplasmic reticulum membrane. It localises to the virion membrane. Its subcellular location is the host Golgi apparatus membrane. Glycoprotein N and glycoprotein C interact with each other and are present at the surface of the virion. Glycoprotein N probably locks the Gn-Gc complex in a prefusion state. Glycoprotein N and glycoprotein C are able to attach the virion to host cell receptors. This attachment induces virion internalization predominantly through clathrin-dependent endocytosis. In terms of biological role, glycoprotein C and glycoprotein N interact with each other and are present at the surface of the virion. The spikes at the surface of the virion are formed by an N-terminal extension of glycoprotein C. Glycoprotein N and glycoprotein C are able to attach the virion to host cell receptors. This attachment induces virion internalization predominantly through clathrin-dependent endocytosis. Class II fusion protein that promotes fusion of viral membrane with host endosomal membrane after endocytosis of the virion. Exposure to potassium is necessary for the conformational change leading to fusion. This is Envelopment polyprotein (GP) from Ixodes.